Here is a 416-residue protein sequence, read N- to C-terminus: Serine hydroxymethyltransferase 1 (416 aa).

(6S)-5,6,7,8-tetrahydrofolate is bound by residues leucine 121 and 125 to 127 (GHL). An N6-(pyridoxal phosphate)lysine modification is found at lysine 229. (6S)-5,6,7,8-tetrahydrofolate is bound by residues glutamate 245 and 354–356 (SPF).

It belongs to the SHMT family. Homodimer. Pyridoxal 5'-phosphate is required as a cofactor.

It is found in the cytoplasm. The catalysed reaction is (6R)-5,10-methylene-5,6,7,8-tetrahydrofolate + glycine + H2O = (6S)-5,6,7,8-tetrahydrofolate + L-serine. It functions in the pathway one-carbon metabolism; tetrahydrofolate interconversion. The protein operates within amino-acid biosynthesis; glycine biosynthesis; glycine from L-serine: step 1/1. Catalyzes the reversible interconversion of serine and glycine with tetrahydrofolate (THF) serving as the one-carbon carrier. This reaction serves as the major source of one-carbon groups required for the biosynthesis of purines, thymidylate, methionine, and other important biomolecules. Also exhibits THF-independent aldolase activity toward beta-hydroxyamino acids, producing glycine and aldehydes, via a retro-aldol mechanism. This Vibrio vulnificus (strain CMCP6) protein is Serine hydroxymethyltransferase 1.